We begin with the raw amino-acid sequence, 233 residues long: 5'-methylthioadenosine/S-adenosylhomocysteine nucleosidase (233 aa).

Catalysis depends on E12, which acts as the Proton acceptor. Residues G78, I156, and 177 to 178 each bind substrate; that span reads ME. The Proton donor role is filled by D201.

Belongs to the PNP/UDP phosphorylase family. MtnN subfamily.

It carries out the reaction S-adenosyl-L-homocysteine + H2O = S-(5-deoxy-D-ribos-5-yl)-L-homocysteine + adenine. It catalyses the reaction S-methyl-5'-thioadenosine + H2O = 5-(methylsulfanyl)-D-ribose + adenine. The enzyme catalyses 5'-deoxyadenosine + H2O = 5-deoxy-D-ribose + adenine. Its pathway is amino-acid biosynthesis; L-methionine biosynthesis via salvage pathway; S-methyl-5-thio-alpha-D-ribose 1-phosphate from S-methyl-5'-thioadenosine (hydrolase route): step 1/2. Functionally, catalyzes the irreversible cleavage of the glycosidic bond in both 5'-methylthioadenosine (MTA) and S-adenosylhomocysteine (SAH/AdoHcy) to adenine and the corresponding thioribose, 5'-methylthioribose and S-ribosylhomocysteine, respectively. Also cleaves 5'-deoxyadenosine, a toxic by-product of radical S-adenosylmethionine (SAM) enzymes, into 5-deoxyribose and adenine. This chain is 5'-methylthioadenosine/S-adenosylhomocysteine nucleosidase, found in Listeria innocua serovar 6a (strain ATCC BAA-680 / CLIP 11262).